A 680-amino-acid polypeptide reads, in one-letter code: tRNA 5-methylaminomethyl-2-thiouridine biosynthesis bifunctional protein MnmC (680 aa).

A tRNA (mnm(5)s(2)U34)-methyltransferase region spans residues 1–245 (MSHPPIQTAT…KREMLTGILP (245 aa)). Residues 270-680 (IGGGIVSALT…PVQQRVSVLS (411 aa)) are FAD-dependent cmnm(5)s(2)U34 oxidoreductase.

This sequence in the N-terminal section; belongs to the methyltransferase superfamily. tRNA (mnm(5)s(2)U34)-methyltransferase family. It in the C-terminal section; belongs to the DAO family. FAD is required as a cofactor.

The protein resides in the cytoplasm. The enzyme catalyses 5-aminomethyl-2-thiouridine(34) in tRNA + S-adenosyl-L-methionine = 5-methylaminomethyl-2-thiouridine(34) in tRNA + S-adenosyl-L-homocysteine + H(+). Catalyzes the last two steps in the biosynthesis of 5-methylaminomethyl-2-thiouridine (mnm(5)s(2)U) at the wobble position (U34) in tRNA. Catalyzes the FAD-dependent demodification of cmnm(5)s(2)U34 to nm(5)s(2)U34, followed by the transfer of a methyl group from S-adenosyl-L-methionine to nm(5)s(2)U34, to form mnm(5)s(2)U34. The polypeptide is tRNA 5-methylaminomethyl-2-thiouridine biosynthesis bifunctional protein MnmC (Yersinia enterocolitica serotype O:8 / biotype 1B (strain NCTC 13174 / 8081)).